A 423-amino-acid chain; its full sequence is Maltoporin 1 (423 aa).

The signal sequence occupies residues 1-24 (MITLRKLPIALAVAAGVLSTQAMA).

It belongs to the porin LamB (TC 1.B.3) family. In terms of assembly, homotrimer formed of three 18-stranded antiparallel beta-barrels, containing three independent channels.

It is found in the cell outer membrane. The catalysed reaction is beta-maltose(in) = beta-maltose(out). Its function is as follows. Involved in the transport of maltose and maltodextrins. The sequence is that of Maltoporin 1 from Yersinia pestis bv. Antiqua (strain Antiqua).